Consider the following 797-residue polypeptide: Discoidin domain-containing receptor tyrosine kinase B (797 aa).

The signal sequence occupies residues 1 to 19; it reads MKLLLYLFGVTFHSNTVVA. Residues 20-384 are Extracellular-facing; sequence LELRECSHQL…VTEHDDGTSM (365 aa). Residues 25-181 enclose the F5/8 type C domain; that stretch reads CSHQLGMSNR…VCMRVEVFGC (157 aa). Cysteine 25 and cysteine 181 are disulfide-bonded. The interval 46-66 is disordered; that stretch reads SFDLQSTGPQHARAHQESGSG. N-linked (GlcNAc...) asparagine glycans are attached at residues asparagine 141, asparagine 167, asparagine 264, and asparagine 353. The helical transmembrane segment at 385–405 threads the bilayer; that stretch reads FAFIIFFFMFLIVAVIILTVL. The Cytoplasmic segment spans residues 406–797; it reads YRKREYRVKA…LVHTSPHIHF (392 aa). A Protein kinase domain is found at 527–785; it reads LICVSRIGQG…PSFENVHLHL (259 aa). ATP is bound by residues 533–541 and lysine 554; that span reads IGQGEFGEV. The active-site Proton acceptor is the aspartate 645.

This sequence belongs to the protein kinase superfamily. Tyr protein kinase family. Insulin receptor subfamily. In terms of assembly, interacts with shc-1. In terms of processing, autophosphorylated on tyrosine residues. N-glycosylation at Asn-141 is required for axon regeneration after injury but is dispensable for kinase activity and axon localization. Expressed in some neurons in head and tail, some motoneurons in ventral nerve cord, in PVP interneurons, seam cells, rectal gland cells, vulva cells and some non-neuronal cells in the tail. Expressed in D-type motor neurons.

The protein resides in the cell membrane. Its subcellular location is the cell projection. It localises to the axon. The protein localises to the perikaryon. The catalysed reaction is L-tyrosyl-[protein] + ATP = O-phospho-L-tyrosyl-[protein] + ADP + H(+). Its function is as follows. Tyrosine-protein kinase receptor which, together with ddr-1, is involved in axon guidance to establish the tracts for the ventral and dorsal nerve cords during nervous system development. Acts upstream of the adapter shc-1, and the tyrosine kinase receptors svh-1 and svh-2 to regulate axon regeneration following injury in D-type motor neurons. May mediate axon regeneration in association with the collagen emb-9. This Caenorhabditis elegans protein is Discoidin domain-containing receptor tyrosine kinase B.